Consider the following 275-residue polypeptide: NAD kinase (275 aa).

D68 (proton acceptor) is an active-site residue. Residues 68-69 (DG), R73, 136-137 (NE), K147, R164, D166, 177-182 (TAYAMS), A201, and Q236 contribute to the NAD(+) site.

It belongs to the NAD kinase family. The cofactor is a divalent metal cation.

The protein resides in the cytoplasm. It catalyses the reaction NAD(+) + ATP = ADP + NADP(+) + H(+). Functionally, involved in the regulation of the intracellular balance of NAD and NADP, and is a key enzyme in the biosynthesis of NADP. Catalyzes specifically the phosphorylation on 2'-hydroxyl of the adenosine moiety of NAD to yield NADP. The polypeptide is NAD kinase (Methanosarcina barkeri (strain Fusaro / DSM 804)).